The following is a 440-amino-acid chain: Transposon Ty1-DR3 Gag polyprotein (440 aa).

Polar residues-rich tracts occupy residues 1-10 (MESQQLSNYP), 48-60 (TKAN…TPAS), and 127-152 (QSQF…GNTF). Disordered regions lie at residues 1–93 (MESQ…MMTQ), 126–173 (PQSQ…RPPP), and 352–440 (GSRN…PETY). Residues 153 to 165 (TDSSSADSDMTST) are compositionally biased toward low complexity. The interval 299–401 (NNGIHINNKV…NSKSKTARAH (103 aa)) is RNA-binding. Polar residues predominate over residues 402–428 (NVSTSINSPSTDNDSISKSTTEPIQLN). S416 is subject to Phosphoserine. Basic and acidic residues predominate over residues 429 to 440 (NKHDLHLRPETY).

Homotrimer.

Its subcellular location is the cytoplasm. Functionally, capsid protein (CA) is the structural component of the virus-like particle (VLP), forming the shell that encapsulates the retrotransposons dimeric RNA genome. The particles are assembled from trimer-clustered units and there are holes in the capsid shells that allow for the diffusion of macromolecules. CA also has nucleocapsid-like chaperone activity, promoting primer tRNA(i)-Met annealing to the multipartite primer-binding site (PBS), dimerization of Ty1 RNA and initiation of reverse transcription. This chain is Transposon Ty1-DR3 Gag polyprotein (TY1A-DR3), found in Saccharomyces cerevisiae (strain ATCC 204508 / S288c) (Baker's yeast).